Reading from the N-terminus, the 433-residue chain is UDP-N-acetylglucosamine 1-carboxyvinyltransferase (433 aa).

A phosphoenolpyruvate-binding site is contributed by 22-23; it reads KN. R96 provides a ligand contact to UDP-N-acetyl-alpha-D-glucosamine. Catalysis depends on C120, which acts as the Proton donor. C120 carries the post-translational modification 2-(S-cysteinyl)pyruvic acid O-phosphothioketal. UDP-N-acetyl-alpha-D-glucosamine contacts are provided by residues 125 to 129, D308, and I330; that span reads RPIDL.

This sequence belongs to the EPSP synthase family. MurA subfamily.

Its subcellular location is the cytoplasm. The catalysed reaction is phosphoenolpyruvate + UDP-N-acetyl-alpha-D-glucosamine = UDP-N-acetyl-3-O-(1-carboxyvinyl)-alpha-D-glucosamine + phosphate. The protein operates within cell wall biogenesis; peptidoglycan biosynthesis. Its function is as follows. Cell wall formation. Adds enolpyruvyl to UDP-N-acetylglucosamine. This chain is UDP-N-acetylglucosamine 1-carboxyvinyltransferase, found in Koribacter versatilis (strain Ellin345).